The primary structure comprises 411 residues: Common plant regulatory factor 1 (411 aa).

The span at 1-14 (MGNTDDVKAVKPEK) shows a compositional bias: basic and acidic residues. Disordered regions lie at residues 1–30 (MGNT…SNSH), 130–197 (AMSI…SSVI), and 232–293 (SSLE…KQAE). The segment covering 148–164 (TLSQSKETEGSSDGSNE) has biased composition (polar residues). Over residues 235 to 244 (ELKDSPKEHA) the composition is skewed to basic and acidic residues. The segment covering 249–259 (AGGQQPSTMMP) has biased composition (polar residues). Basic and acidic residues predominate over residues 264–293 (LHNDRDLKRERRKQSNRESARRSRLRKQAE). The bZIP domain maps to 269–332 (DLKRERRKQS…EKLTNDNSRL (64 aa)). The tract at residues 271–290 (KRERRKQSNRESARRSRLRK) is basic motif. Residues 297–332 (LAIKVDSLTAENMALKAEINRLTLTAEKLTNDNSRL) are leucine-zipper. The tract at residues 346–411 (DVGLGNNNEK…NPRTDAVAAG (66 aa)) is disordered.

This sequence belongs to the bZIP family. In terms of assembly, binds DNA as a dimer.

The protein resides in the nucleus. In terms of biological role, binds to the G-box-like motif (5'-ACGTGGC-3') of the chalcone synthase (CHS) gene promoter. G-box and G-box-like motifs are defined in promoters of certain plant genes which are regulated by such diverse stimuli as light-induction or hormone control. This Petroselinum crispum (Parsley) protein is Common plant regulatory factor 1 (CPRF1).